We begin with the raw amino-acid sequence, 216 residues long: Sugar transporter SWEET1 (216 aa).

The next 7 helical transmembrane spans lie at 3 to 23 (WMWL…SSGL), 36 to 56 (ENIQ…WFYY), 65 to 85 (LMIV…AYLL), 96 to 116 (QVLV…LWIL), 125 to 145 (LGLF…ADLA), 157 to 177 (SFPL…YGLV), and 181 to 201 (LYIT…FWLF). The region spanning 6-90 (LLSGACIVFT…GAYLLYSPER (85 aa)) is the MtN3/slv 1 domain. Residues 124–206 (QLGLFCSVFT…RFWLFSQFPP (83 aa)) form the MtN3/slv 2 domain.

Belongs to the SWEET sugar transporter family.

It localises to the golgi apparatus membrane. It is found in the cell membrane. In terms of biological role, mediates sugar transport across membranes. This Xenopus laevis (African clawed frog) protein is Sugar transporter SWEET1 (slc50a1).